Reading from the N-terminus, the 45-residue chain is DVCDSLVGGRCIHNGCYCERSAPNGNCCDTAGCTVLWWCPGTKFD.

Disulfide bonds link cysteine 3/cysteine 16, cysteine 11/cysteine 28, cysteine 18/cysteine 33, and cysteine 27/cysteine 39. The residue at position 23 (proline 23) is a 4-hydroxyproline. 2 positions are modified to 6'-bromotryptophan: tryptophan 37 and tryptophan 38. Proline 40 bears the 4-hydroxyproline mark.

In terms of tissue distribution, expressed by the venom duct.

Its subcellular location is the secreted. In terms of biological role, mu-conotoxins block voltage-gated sodium channels. This toxin reversibly blocks voltage-gated sodium channel in cephalopods, with no alteration in the voltage dependence of sodium conductance or on the kinetics of inactivation. The sequence is that of Mu-conotoxin-like Cal 12.1.2g from Californiconus californicus (California cone).